The chain runs to 336 residues: N-acetyl-gamma-glutamyl-phosphate reductase (336 aa).

Residue cysteine 148 is part of the active site.

This sequence belongs to the NAGSA dehydrogenase family. Type 1 subfamily.

Its subcellular location is the cytoplasm. It catalyses the reaction N-acetyl-L-glutamate 5-semialdehyde + phosphate + NADP(+) = N-acetyl-L-glutamyl 5-phosphate + NADPH + H(+). It participates in amino-acid biosynthesis; L-arginine biosynthesis; N(2)-acetyl-L-ornithine from L-glutamate: step 3/4. Its function is as follows. Catalyzes the NADPH-dependent reduction of N-acetyl-5-glutamyl phosphate to yield N-acetyl-L-glutamate 5-semialdehyde. In Campylobacter curvus (strain 525.92), this protein is N-acetyl-gamma-glutamyl-phosphate reductase.